The chain runs to 495 residues: uncharacterized protein (495 aa).

FAD contacts are provided by serine 16, glutamate 36, tryptophan 45, aspartate 56, tyrosine 62, and valine 105.

Belongs to the FAD-binding monooxygenase family. The cofactor is FAD.

This is an uncharacterized protein from Mycobacterium tuberculosis (strain CDC 1551 / Oshkosh).